Reading from the N-terminus, the 615-residue chain is Elongation factor 4 (615 aa).

The tr-type G domain occupies 14–200; that stretch reads ARIRNFCIIA…KVVELIPAPT (187 aa). GTP is bound by residues 26–31 and 147–150; these read DHGKST and NKID.

The protein belongs to the TRAFAC class translation factor GTPase superfamily. Classic translation factor GTPase family. LepA subfamily.

It localises to the cell membrane. The catalysed reaction is GTP + H2O = GDP + phosphate + H(+). Its function is as follows. Required for accurate and efficient protein synthesis under certain stress conditions. May act as a fidelity factor of the translation reaction, by catalyzing a one-codon backward translocation of tRNAs on improperly translocated ribosomes. Back-translocation proceeds from a post-translocation (POST) complex to a pre-translocation (PRE) complex, thus giving elongation factor G a second chance to translocate the tRNAs correctly. Binds to ribosomes in a GTP-dependent manner. The sequence is that of Elongation factor 4 from Corynebacterium glutamicum (strain ATCC 13032 / DSM 20300 / JCM 1318 / BCRC 11384 / CCUG 27702 / LMG 3730 / NBRC 12168 / NCIMB 10025 / NRRL B-2784 / 534).